Reading from the N-terminus, the 116-residue chain is NAD(P)H-quinone oxidoreductase subunit M (116 aa).

It belongs to the complex I NdhM subunit family. In terms of assembly, NDH-1 can be composed of about 15 different subunits; different subcomplexes with different compositions have been identified which probably have different functions.

It is found in the cellular thylakoid membrane. It catalyses the reaction a plastoquinone + NADH + (n+1) H(+)(in) = a plastoquinol + NAD(+) + n H(+)(out). It carries out the reaction a plastoquinone + NADPH + (n+1) H(+)(in) = a plastoquinol + NADP(+) + n H(+)(out). Its function is as follows. NDH-1 shuttles electrons from an unknown electron donor, via FMN and iron-sulfur (Fe-S) centers, to quinones in the respiratory and/or the photosynthetic chain. The immediate electron acceptor for the enzyme in this species is believed to be plastoquinone. Couples the redox reaction to proton translocation, and thus conserves the redox energy in a proton gradient. Cyanobacterial NDH-1 also plays a role in inorganic carbon-concentration. This chain is NAD(P)H-quinone oxidoreductase subunit M, found in Synechococcus sp. (strain RCC307).